Reading from the N-terminus, the 256-residue chain is Protein FixA (256 aa).

It belongs to the ETF beta-subunit/FixA family. As to quaternary structure, heterodimer of FixA and FixB.

It participates in amine and polyamine metabolism; carnitine metabolism. In terms of biological role, required for anaerobic carnitine reduction. May bring reductant to CaiA. In Shigella flexneri serotype 5b (strain 8401), this protein is Protein FixA.